We begin with the raw amino-acid sequence, 458 residues long: Elongation factor 1-alpha (458 aa).

At G2 the chain carries N,N,N-trimethylglycine. K3 carries the post-translational modification N6,N6-dimethyllysine; alternate. K3 carries the post-translational modification N6-methyllysine; alternate. Positions 5–240 constitute a tr-type G domain; the sequence is KTHVNVVVIG…DAIEPPQRPT (236 aa). The tract at residues 14–21 is G1; the sequence is GHVDSGKS. 14 to 21 contacts GTP; sequence GHVDSGKS. K30 carries the post-translational modification N6-methyllysine. The G2 stretch occupies residues 70 to 74; it reads GITID. At K79 the chain carries N6,N6,N6-trimethyllysine. Positions 91 to 94 are G3; that stretch reads DAPG. GTP contacts are provided by residues 91 to 95 and 153 to 156; these read DAPGH and NKMD. Residues 153–156 form a G4 region; it reads NKMD. Positions 192-194 are G5; it reads SGW. Position 316 is an N6,N6-dimethyllysine; alternate (K316). K316 carries the post-translational modification N6-methyllysine; alternate. An N6-methyllysine modification is found at K390.

Belongs to the TRAFAC class translation factor GTPase superfamily. Classic translation factor GTPase family. EF-Tu/EF-1A subfamily.

The protein localises to the cytoplasm. It functions in the pathway protein biosynthesis; polypeptide chain elongation. In terms of biological role, this protein promotes the GTP-dependent binding of aminoacyl-tRNA to the A-site of ribosomes during protein biosynthesis. The chain is Elongation factor 1-alpha (TEF1) from Meyerozyma guilliermondii (strain ATCC 6260 / CBS 566 / DSM 6381 / JCM 1539 / NBRC 10279 / NRRL Y-324) (Yeast).